Consider the following 141-residue polypeptide: Large ribosomal subunit protein uL11 (141 aa).

Belongs to the universal ribosomal protein uL11 family. Part of the ribosomal stalk of the 50S ribosomal subunit. Interacts with L10 and the large rRNA to form the base of the stalk. L10 forms an elongated spine to which L12 dimers bind in a sequential fashion forming a multimeric L10(L12)X complex. In terms of processing, one or more lysine residues are methylated.

Its function is as follows. Forms part of the ribosomal stalk which helps the ribosome interact with GTP-bound translation factors. The protein is Large ribosomal subunit protein uL11 of Streptococcus uberis (strain ATCC BAA-854 / 0140J).